The sequence spans 172 residues: Ribosome maturation factor RimM (172 aa).

A PRC barrel domain is found at 99–171 (DDIPTWNYFI…LLTVEVPDGL (73 aa)).

Belongs to the RimM family. Binds ribosomal protein uS19.

The protein localises to the cytoplasm. An accessory protein needed during the final step in the assembly of 30S ribosomal subunit, possibly for assembly of the head region. Essential for efficient processing of 16S rRNA. May be needed both before and after RbfA during the maturation of 16S rRNA. It has affinity for free ribosomal 30S subunits but not for 70S ribosomes. This Phocaeicola vulgatus (strain ATCC 8482 / DSM 1447 / JCM 5826 / CCUG 4940 / NBRC 14291 / NCTC 11154) (Bacteroides vulgatus) protein is Ribosome maturation factor RimM.